The following is a 484-amino-acid chain: Zinc metalloproteinase-disintegrin BlatH1 (484 aa).

The first 20 residues, 1-20 (MIQVLLVTICLAALPYQGSS), serve as a signal peptide directing secretion. A propeptide spanning residues 21 to 190 (IILESGNVND…KKASQSNLTP (170 aa)) is cleaved from the precursor. A Pyrrolidone carboxylic acid (Glu) modification is found at E191. One can recognise a Peptidase M12B domain in the interval 199 to 395 (KYVELVIVAD…QNSQCILNEP (197 aa)). E202 provides a ligand contact to Ca(2+). N259 carries N-linked (GlcNAc...) asparagine glycosylation. D286 is a binding site for Ca(2+). N297 is a glycosylation site (N-linked (GlcNAc...) asparagine). 3 cysteine pairs are disulfide-bonded: C310–C390, C350–C374, and C352–C357. H335 is a binding site for Zn(2+). E336 is an active-site residue. H339 and H345 together coordinate Zn(2+). An N-linked (GlcNAc...) asparagine glycan is attached at N373. Positions 390, 393, 405, 408, 412, 415, and 418 each coordinate Ca(2+). Residues 403-484 (PPVCGNEILE…GQSADCPSNG (82 aa)) enclose the Disintegrin domain. 7 disulfides stabilise this stretch: C406–C425, C417–C435, C419–C430, C429–C452, C443–C449, C448–C473, and C461–C480. Positions 465 to 467 (TDN) match the TDN-tripeptide motif.

The protein belongs to the venom metalloproteinase (M12B) family. P-II subfamily. P-IIc sub-subfamily. Homodimer. Zn(2+) is required as a cofactor. Post-translationally, the N-terminus is blocked. As to expression, expressed by the venom gland.

It localises to the secreted. With respect to regulation, platelet aggregation in inhibited by the metalloproteinase inhibitors EDTA and Batimastat. The hemorrhagic activity is not inhibited by the plasma proteinase inhibitor alpha2-macroglobulin, although the SVMP is able to cleave this plasma inhibitor, generating a 90 kDa product. Snake venom zinc metalloprotease-disintegrin that hydrolyzes azocasein, gelatin and fibrinogen (Aalpha and Bbeta chains and partially gamma-chain), and exerts a potent local and systemic hemorrhagic activity in mice. It inhibits ADP- and collagen-induced human platelet aggregation (IC(50) = 0.3 uM and 0.7 uM for ADP and collagen, respectively). This inhibition is dependent of protease activity, and probably occurs through the degradation of an unknown platelet receptor. This Bothriechis lateralis (Side-striped palm pitviper) protein is Zinc metalloproteinase-disintegrin BlatH1.